Reading from the N-terminus, the 174-residue chain is ATP-dependent protease subunit HslV (174 aa).

Residue Thr4 is part of the active site. The Na(+) site is built by Ala159, Cys162, and Thr165.

It belongs to the peptidase T1B family. HslV subfamily. A double ring-shaped homohexamer of HslV is capped on each side by a ring-shaped HslU homohexamer. The assembly of the HslU/HslV complex is dependent on binding of ATP.

The protein localises to the cytoplasm. The enzyme catalyses ATP-dependent cleavage of peptide bonds with broad specificity.. With respect to regulation, allosterically activated by HslU binding. Functionally, protease subunit of a proteasome-like degradation complex believed to be a general protein degrading machinery. The polypeptide is ATP-dependent protease subunit HslV (Moorella thermoacetica (strain ATCC 39073 / JCM 9320)).